The primary structure comprises 90 residues: uncharacterized protein (90 aa).

This is an uncharacterized protein from Homo sapiens (Human).